The following is a 182-amino-acid chain: ATP-dependent protease subunit HslV (182 aa).

Thr-2 is an active-site residue. Residues Gly-157, Cys-160, and Thr-163 each contribute to the Na(+) site.

Belongs to the peptidase T1B family. HslV subfamily. In terms of assembly, a double ring-shaped homohexamer of HslV is capped on each side by a ring-shaped HslU homohexamer. The assembly of the HslU/HslV complex is dependent on binding of ATP.

Its subcellular location is the cytoplasm. The enzyme catalyses ATP-dependent cleavage of peptide bonds with broad specificity.. Allosterically activated by HslU binding. Its function is as follows. Protease subunit of a proteasome-like degradation complex believed to be a general protein degrading machinery. This chain is ATP-dependent protease subunit HslV, found in Vibrio atlanticus (strain LGP32) (Vibrio splendidus (strain Mel32)).